The primary structure comprises 156 residues: Small ribosomal subunit protein uS7c (156 aa).

Belongs to the universal ribosomal protein uS7 family. Part of the 30S ribosomal subunit.

It is found in the plastid. It localises to the chloroplast. One of the primary rRNA binding proteins, it binds directly to 16S rRNA where it nucleates assembly of the head domain of the 30S subunit. This Gracilaria tenuistipitata var. liui (Red alga) protein is Small ribosomal subunit protein uS7c (rps7).